Consider the following 247-residue polypeptide: ATP synthase subunit a, plastid (247 aa).

5 helical membrane passes run 33–53 (FLVH…LLGS), 95–115 (VPFI…GALL), 134–154 (INTT…AGIL), 199–219 (LVVV…VMLL), and 220–240 (GLFT…AYIG).

It belongs to the ATPase A chain family. In terms of assembly, F-type ATPases have 2 components, CF(1) - the catalytic core - and CF(0) - the membrane proton channel. CF(1) has five subunits: alpha(3), beta(3), gamma(1), delta(1), epsilon(1). CF(0) has four main subunits: a, b, b' and c.

The protein resides in the plastid membrane. Its function is as follows. Key component of the proton channel; it plays a direct role in the translocation of protons across the membrane. This Cuscuta exaltata (Tall dodder) protein is ATP synthase subunit a, plastid.